Reading from the N-terminus, the 248-residue chain is Protein PIMREG (248 aa).

Residues 1–10 (MASRWQNMGT) are compositionally biased toward polar residues. The interval 1-32 (MASRWQNMGTSVRRRSLQHQEQLEDSKELQPV) is disordered. Residues Ser11 and Ser16 each carry the phosphoserine modification. 2 consecutive short sequence motifs (D-box) follow at residues 14–17 (RRSL) and 53–56 (RLPL). Residues 117–205 (KARRRKRGAQ…PSESDSDLEP (89 aa)) are disordered. Ser129 carries the post-translational modification Phosphoserine. Ser131 is modified (phosphoserine; by UHMK1; in vitro). Polar residues-rich tracts occupy residues 132–143 (PTHSLSQKSTRL) and 186–198 (PYSSTEPLCSPSE). Phosphoserine is present on residues Ser199 and Ser201.

As to quaternary structure, isoform 1 and isoform 2 interact with PICALM; this interaction may target PICALM to the nucleus. During mitosis, associates with HDAC2 and MTA2 subunits of the chromatin-remodeling NuRD complex; this association is strongest at prometaphase and decreases as the cell progresses through metaphase and anaphase. In terms of processing, ubiquitinated by the anaphase-promoting complex/cyclosome (APC/C) complex in the presence of FZR1, leading to its degradation by the proteasome during mitotic exit. However, degradation is not essential for normal mitotic progression within a single cell cycle. Expressed in thymus (at protein level). Detected in spleen, colon, ovary and small intestines.

It localises to the nucleus. Its subcellular location is the nucleolus. Its function is as follows. During mitosis, may play a role in the control of metaphase-to-anaphase transition. The sequence is that of Protein PIMREG from Homo sapiens (Human).